A 56-amino-acid polypeptide reads, in one-letter code: Male determiner protein Yob (56 aa).

In terms of biological role, male determiner protein (M-factor) that controls male somatic sexual differentiation. Acts as a dominant factor that regulates the mRNA splicing of doublesex (dsx) transcripts and promotes expression of male splice forms of dsx. The polypeptide is Male determiner protein Yob (Anopheles gambiae (African malaria mosquito)).